A 725-amino-acid polypeptide reads, in one-letter code: Probable alpha-galactosidase G (725 aa).

An N-linked (GlcNAc...) asparagine glycan is attached at Asn-407. The Nucleophile role is filled by Asp-484. A glycan (N-linked (GlcNAc...) asparagine) is linked at Asn-490. Residue Asp-546 is the Proton donor of the active site. N-linked (GlcNAc...) asparagine glycosylation is present at Asn-672.

It belongs to the glycosyl hydrolase 36 family. In terms of assembly, homotetramer. The cofactor is Mg(2+). Requires NAD(+) as cofactor.

It is found in the secreted. It catalyses the reaction Hydrolysis of terminal, non-reducing alpha-D-galactose residues in alpha-D-galactosides, including galactose oligosaccharides, galactomannans and galactolipids.. Functionally, hydrolyzes a variety of simple alpha-D-galactoside as well as more complex molecules such as oligosaccharides and polysaccharides. This is Probable alpha-galactosidase G (aglG) from Aspergillus terreus (strain NIH 2624 / FGSC A1156).